The sequence spans 369 residues: 2-aminoethylphosphonate--pyruvate transaminase (369 aa).

At K193 the chain carries N6-(pyridoxal phosphate)lysine.

It belongs to the class-V pyridoxal-phosphate-dependent aminotransferase family. PhnW subfamily. In terms of assembly, homodimer. It depends on pyridoxal 5'-phosphate as a cofactor.

It carries out the reaction (2-aminoethyl)phosphonate + pyruvate = phosphonoacetaldehyde + L-alanine. Its function is as follows. Involved in phosphonate degradation. The chain is 2-aminoethylphosphonate--pyruvate transaminase from Burkholderia thailandensis (strain ATCC 700388 / DSM 13276 / CCUG 48851 / CIP 106301 / E264).